Here is a 145-residue protein sequence, read N- to C-terminus: Ribonuclease H (145 aa).

An RNase H type-1 domain is found at 2 to 143; the sequence is SKKEVAIYTD…ADSLARKAII (142 aa). Mg(2+)-binding residues include Asp-11, Glu-49, Asp-71, and Asp-135.

The protein belongs to the RNase H family. Monomer. The cofactor is Mg(2+).

Its subcellular location is the cytoplasm. It catalyses the reaction Endonucleolytic cleavage to 5'-phosphomonoester.. Endonuclease that specifically degrades the RNA of RNA-DNA hybrids. The polypeptide is Ribonuclease H (Wolbachia sp. subsp. Drosophila simulans (strain wRi)).